The chain runs to 709 residues: Transcriptional factor SWI5 (709 aa).

Ser-225 bears the Phosphoserine mark. Over residues 245 to 264 (LSPMISPPMSNTSFTGSPSR) the composition is skewed to polar residues. The tract at residues 245–267 (LSPMISPPMSNTSFTGSPSRRNN) is disordered. Phosphoserine is present on residues Ser-278 and Ser-300. Thr-339 bears the Phosphothreonine mark. A Phosphoserine modification is found at Ser-376. The tract at residues 443–483 (LKPPSQQARHREGVFNDLDPNVLTKNTDNEGDDNEENEPES) is disordered. Acidic residues predominate over residues 471 to 480 (NEGDDNEENE). Phosphoserine occurs at positions 488, 492, and 505. The residue at position 522 (Ser-522) is a Phosphoserine; by CDC28. 3 C2H2-type zinc fingers span residues 550–574 (FECL…IQTH), 580–604 (YSCD…KKSH), and 609–632 (YACP…RMIC). Residues 635-659 (GKKYENVVIKRSPRKRGRPRKDGTS) carry the Nuclear localization signal motif. Positions 644 to 677 (KRSPRKRGRPRKDGTSSVSSSPIKENINKDHNGQ) are disordered. Phosphoserine; by CDC28 is present on Ser-646. Residues 647 to 659 (PRKRGRPRKDGTS) constitute a DNA-binding region (a.T hook). Ser-664 is subject to Phosphoserine; by CDC28.

Cell cycle-dependent phosphorylation of three serine residues prevents SWI5 from entering the nucleus, and it accumulates in the cytoplasm. As a consequence of CDC28 kinase inactivation at the end of anaphase, the three serine residues are dephosphorylated and SWI5 enters the nucleus to activate transcription. It is then rapidly degraded. Threonine phosphorylation also seems to occur. Post-translationally, phosphorylated by PHO85.

Its subcellular location is the nucleus. The protein localises to the cytoplasm. In terms of biological role, determines the mother-cell-specific transcription of the HO endonuclease gene that is responsible for the initiation of mating-type switching in yeast. Recognizes a specific sequence in the promoter of the HO gene. Activates EGT2 transcription in a concentration-dependent manner. Synthesized during G2 and early mitosis. The protein is Transcriptional factor SWI5 (SWI5) of Saccharomyces cerevisiae (strain ATCC 204508 / S288c) (Baker's yeast).